Consider the following 159-residue polypeptide: uncharacterized protein (159 aa).

This is an uncharacterized protein from Homo sapiens (Human).